We begin with the raw amino-acid sequence, 218 residues long: Uracil-DNA glycosylase (218 aa).

Asp68 (proton acceptor) is an active-site residue.

Belongs to the uracil-DNA glycosylase (UDG) superfamily. UNG family. In terms of assembly, homodimer. Interacts with protein OPG148. Component of the Uracil-DNA glycosylase(UDG)-OPG148-polymerase complex; OPG148 and UDG form a heterodimeric processivity factor that associates with OPG71 to form the processive polymerase holoenzyme.

The catalysed reaction is Hydrolyzes single-stranded DNA or mismatched double-stranded DNA and polynucleotides, releasing free uracil.. In terms of biological role, plays an essential role in viral replication as a component of the DNA polymerase processivity factor. Excises uracil residues from the DNA which can arise as a result of misincorporation of dUMP residues by DNA polymerase or due to deamination of cytosine. The sequence is that of Uracil-DNA glycosylase (OPG116) from Vaccinia virus (strain Ankara) (VACV).